The following is a 403-amino-acid chain: Nodal homolog (403 aa).

Residues 1–18 (MAFLTAVLCFGFACMVQG) form the signal peptide. Positions 19 to 278 (VPSWLESRIP…RMPGIRRHRR (260 aa)) are excised as a propeptide. N-linked (GlcNAc...) asparagine glycosylation is found at asparagine 68, asparagine 133, and asparagine 169. The tract at residues 195–220 (AERGSGMSSAEFLDSPGDSPQYNPHH) is disordered. 3 disulfide bridges follow: cysteine 303-cysteine 369, cysteine 332-cysteine 400, and cysteine 336-cysteine 402. Asparagine 341 is a glycosylation site (N-linked (GlcNAc...) asparagine).

The protein belongs to the TGF-beta family. In terms of assembly, homodimer; disulfide-linked. Interacts with, and is inhibited by cer1 and gdf10/bmp3b.

Its subcellular location is the secreted. Functionally, cooperation and regulatory loops of multiple nodals are essential for mesendoderm patterning in early embryos. Essential for mesoderm formation and axial patterning during embryonic development. Activates the activin-like signaling pathway to induce dorsal and ventral mesoderm in animal cap ectoderm. In addition, also dorsalizes ventral marginal zone (VMZ) tissues during gastrulation. Acts in a downstream signaling cascade via cripto and cer1 to mediate cardiogenesis in embryonic mesoderm. Directs the orientation of the left-right axis by driving the left-specific gene cascade in the left lateral plate mesoderm. The protein is Nodal homolog of Xenopus tropicalis (Western clawed frog).